Consider the following 149-residue polypeptide: Large ribosomal subunit protein bL9 (149 aa).

The protein belongs to the bacterial ribosomal protein bL9 family.

In terms of biological role, binds to the 23S rRNA. The chain is Large ribosomal subunit protein bL9 from Acidothermus cellulolyticus (strain ATCC 43068 / DSM 8971 / 11B).